A 179-amino-acid polypeptide reads, in one-letter code: Large ribosomal subunit protein uL5 (179 aa).

K3 carries the post-translational modification N6-acetyllysine.

Belongs to the universal ribosomal protein uL5 family. Part of the 50S ribosomal subunit; part of the 5S rRNA/L5/L18/L25 subcomplex. Contacts the 5S rRNA and the P site tRNA. Forms a bridge to the 30S subunit in the 70S ribosome.

In terms of biological role, this is one of the proteins that bind and probably mediate the attachment of the 5S RNA into the large ribosomal subunit, where it forms part of the central protuberance. In the 70S ribosome it contacts protein S13 of the 30S subunit (bridge B1b), connecting the 2 subunits; this bridge is implicated in subunit movement. Contacts the P site tRNA; the 5S rRNA and some of its associated proteins might help stabilize positioning of ribosome-bound tRNAs. The sequence is that of Large ribosomal subunit protein uL5 from Shigella flexneri.